The following is an 802-amino-acid chain: DNA mismatch repair protein MutS (802 aa).

617–624 (GPNMGGKS) contributes to the ATP binding site.

Belongs to the DNA mismatch repair MutS family.

This protein is involved in the repair of mismatches in DNA. It is possible that it carries out the mismatch recognition step. This protein has a weak ATPase activity. This chain is DNA mismatch repair protein MutS, found in Buchnera aphidicola subsp. Acyrthosiphon pisum (strain Tuc7).